Here is a 27-residue protein sequence, read N- to C-terminus: Flagellar filament 34 kDa core protein (27 aa).

Belongs to the bacterial flagellin family. The flagellum consists of an outer layer composed of repeating units of FlaA around a core that contains one or all of five antigenically related polypeptides.

Its subcellular location is the periplasmic flagellum. It is found in the periplasm. Component of the core of the flagella. In Spirochaeta aurantia, this protein is Flagellar filament 34 kDa core protein.